The primary structure comprises 716 residues: MPLPEPSEQEGESVKAGQEPSPKPGTDVIPAAPRKPREFSKLVLLTASDQDEDGVGSKPQEVHCVLSLEMAGPATLASTLQILPVEEQGGVVQPALEMPEQKCSKLDAAAPQSLEFLRTPFGGRLLVLESFLYKQEKAVGDKVYWKCRQHAELGCRGRAITRGLRATVMRGHCHAPDEQGLEARRQREKLPSLALPEGLGEPQGPEGPGGRVEEPLEGVGPWQCPEEPEPTPGLVLSKPALEEEEAPRALSLLSLPPKKRSILGLGQARPLEFLRTCYGGSFLVHESFLYKREKAVGDKVYWTCRDHALHGCRSRAITQGQRVTVMRGHCHQPDMEGLEARRQQEKAVETLQAGQDGPGSQVDTLLRGVDSLLYRRGPGPLTLTRPRPRKRAKVEDQELPTQPEAPDEHQDMDADPGGPEFLKTPLGGSFLVYESFLYRREKAAGEKVYWTCRDQARMGCRSRAITQGRRVTVMRGHCHPPDLGGLEALRQREKRPNTAQRGSPGGPEFLKTPLGGSFLVYESFLYRREKAAGEKVYWTCRDQARMGCRSRAITQGRRVMVMRRHCHPPDLGGLEALRQREHFPNLAQWDSPDPLRPLEFLRTSLGGRFLVHESFLYRKEKAAGEKVYWMCRDQARLGCRSRAITQGHRIMVMRSHCHQPDLAGLEALRQRERLPTTAQQEDPEKIQVQLCFKTCSPESQQIYGDIKDVRLDGESQ.

Residues 1–35 (MPLPEPSEQEGESVKAGQEPSPKPGTDVIPAAPRK) form a disordered region. Residue serine 21 is modified to Phosphoserine. The FLYWCH-type 1 zinc-finger motif lies at 116 to 174 (FLRTPFGGRLLVLESFLYKQEKAVGDKVYWKCRQHAELGCRGRAITRGLRATVMRGHCH). Residue lysine 134 forms a Glycyl lysine isopeptide (Lys-Gly) (interchain with G-Cter in SUMO2) linkage. The tract at residues 191-231 (PSLALPEGLGEPQGPEGPGGRVEEPLEGVGPWQCPEEPEPT) is disordered. Over residues 195–204 (LPEGLGEPQG) the composition is skewed to low complexity. Position 261 is a phosphoserine (serine 261). An FLYWCH-type 2 zinc finger spans residues 273-331 (FLRTCYGGSFLVHESFLYKREKAVGDKVYWTCRDHALHGCRSRAITQGQRVTVMRGHCH). Serine 371 carries the phosphoserine modification. The segment at 377–421 (GPGPLTLTRPRPRKRAKVEDQELPTQPEAPDEHQDMDADPGGPEF) is disordered. A Glycyl lysine isopeptide (Lys-Gly) (interchain with G-Cter in SUMO2) cross-link involves residue lysine 393. The FLYWCH-type 3 zinc finger occupies 421–479 (FLKTPLGGSFLVYESFLYRREKAAGEKVYWTCRDQARMGCRSRAITQGRRVTVMRGHCH). Serine 503 carries the phosphoserine modification. Residues 509 to 567 (FLKTPLGGSFLVYESFLYRREKAAGEKVYWTCRDQARMGCRSRAITQGRRVMVMRRHCH) form an FLYWCH-type 4 zinc finger. The residue at position 591 (serine 591) is a Phosphoserine. An FLYWCH-type 5 zinc finger spans residues 600-658 (FLRTSLGGRFLVHESFLYRKEKAAGEKVYWMCRDQARLGCRSRAITQGHRIMVMRSHCH). Lysine 685 participates in a covalent cross-link: Glycyl lysine isopeptide (Lys-Gly) (interchain with G-Cter in SUMO2). A Phosphoserine modification is found at serine 696.

Interacts with CTNNB1 (when unphosphorylated), perhaps preventing interaction of CTNNB1 with TCF4, and thereby regulating transcription activation; phosphorylation of CTNNB1 may inhibit the interaction.

Its subcellular location is the nucleus. The protein resides in the chromosome. It is found in the centromere. In terms of biological role, transcription cofactor. Negatively regulates transcription activation by catenin beta-1 CTNNB1, perhaps acting by competing with TCF4 for CTNNB1 binding. May play a role in DNA-damage response signaling. Binds specifically to DNA sequences at peri-centromeric chromatin loci. This chain is FLYWCH-type zinc finger-containing protein 1 (FLYWCH1), found in Homo sapiens (Human).